A 291-amino-acid chain; its full sequence is m-AAA protease-interacting protein 1, mitochondrial (291 aa).

The transit peptide at 1–96 (MALAVRLLPR…TFPSCPRRTY (96 aa)) directs the protein to the mitochondrion.

As to quaternary structure, interacts with AFG3L2. Interacts with SPG7. Interacts with SMDT1/EMRE (via the N-terminal transit peptide); interaction is direct and takes place before maturation of SMDT1/EMRE.

The protein localises to the mitochondrion matrix. Promotes sorting of SMDT1/EMRE in mitochondria by ensuring its maturation. Interacts with the transit peptide region of SMDT1/EMRE precursor protein in the mitochondrial matrix, leading to protect it against protein degradation by YME1L1, thereby ensuring SMDT1/EMRE maturation by the mitochondrial processing peptidase (PMPCA and PMPCB). This Bos taurus (Bovine) protein is m-AAA protease-interacting protein 1, mitochondrial.